Reading from the N-terminus, the 343-residue chain is Tetraacyldisaccharide 4'-kinase (343 aa).

53–60 (TCGGAGKT) contacts ATP.

It belongs to the LpxK family.

The catalysed reaction is a lipid A disaccharide + ATP = a lipid IVA + ADP + H(+). It functions in the pathway glycolipid biosynthesis; lipid IV(A) biosynthesis; lipid IV(A) from (3R)-3-hydroxytetradecanoyl-[acyl-carrier-protein] and UDP-N-acetyl-alpha-D-glucosamine: step 6/6. In terms of biological role, transfers the gamma-phosphate of ATP to the 4'-position of a tetraacyldisaccharide 1-phosphate intermediate (termed DS-1-P) to form tetraacyldisaccharide 1,4'-bis-phosphate (lipid IVA). The sequence is that of Tetraacyldisaccharide 4'-kinase from Bartonella quintana (strain Toulouse) (Rochalimaea quintana).